A 1057-amino-acid polypeptide reads, in one-letter code: Carbamoyl phosphate synthase large chain (1057 aa).

The interval 1-401 (MPKRNDIKTI…SLLKAIRSLE (401 aa)) is carboxyphosphate synthetic domain. R129, R169, G175, G176, K208, I210, E215, G241, I242, H243, Q284, and E298 together coordinate ATP. Residues 133-327 (RNLMNELNEP…IAKLAAKIAV (195 aa)) form the ATP-grasp 1 domain. Q284, E298, and N300 together coordinate Mg(2+). Positions 284, 298, and 300 each coordinate Mn(2+). The interval 402-546 (YGVHHLGLPN…YGTYETENES (145 aa)) is oligomerization domain. A carbamoyl phosphate synthetic domain region spans residues 547–929 (IRSDKKKVVV…ALYKGLVASG (383 aa)). The ATP-grasp 2 domain occupies 671–861 (EALMQRIEIP…MANLAMKAIL (191 aa)). Residues R707, R746, L748, E752, G777, V778, H779, S780, Q820, and E832 each coordinate ATP. The Mg(2+) site is built by Q820, E832, and N834. Mn(2+) is bound by residues Q820, E832, and N834. The MGS-like domain occupies 930–1057 (LQVKDHGTVL…ESMTFNMNQM (128 aa)). Residues 930–1057 (LQVKDHGTVL…ESMTFNMNQM (128 aa)) form an allosteric domain region.

This sequence belongs to the CarB family. As to quaternary structure, composed of two chains; the small (or glutamine) chain promotes the hydrolysis of glutamine to ammonia, which is used by the large (or ammonia) chain to synthesize carbamoyl phosphate. Tetramer of heterodimers (alpha,beta)4. The cofactor is Mg(2+). Requires Mn(2+) as cofactor.

It catalyses the reaction hydrogencarbonate + L-glutamine + 2 ATP + H2O = carbamoyl phosphate + L-glutamate + 2 ADP + phosphate + 2 H(+). It carries out the reaction hydrogencarbonate + NH4(+) + 2 ATP = carbamoyl phosphate + 2 ADP + phosphate + 2 H(+). It functions in the pathway amino-acid biosynthesis; L-arginine biosynthesis; carbamoyl phosphate from bicarbonate: step 1/1. The protein operates within pyrimidine metabolism; UMP biosynthesis via de novo pathway; (S)-dihydroorotate from bicarbonate: step 1/3. Large subunit of the glutamine-dependent carbamoyl phosphate synthetase (CPSase). CPSase catalyzes the formation of carbamoyl phosphate from the ammonia moiety of glutamine, carbonate, and phosphate donated by ATP, constituting the first step of 2 biosynthetic pathways, one leading to arginine and/or urea and the other to pyrimidine nucleotides. The large subunit (synthetase) binds the substrates ammonia (free or transferred from glutamine from the small subunit), hydrogencarbonate and ATP and carries out an ATP-coupled ligase reaction, activating hydrogencarbonate by forming carboxy phosphate which reacts with ammonia to form carbamoyl phosphate. This is Carbamoyl phosphate synthase large chain from Macrococcus caseolyticus (strain JCSC5402) (Macrococcoides caseolyticum).